Consider the following 257-residue polypeptide: MDRRSRAQQWRRARHNYNDLCPPIGRRAATALLWLSCSIALLRALASSNARAQQRAAQRRSFLNAHHRSAAAAAAAQVLPESSESESDHEHEEVEPELARPECLEYDQDDYETETDSETEPESDIESETEIETEPETEPETAPTTEPETEPEDERGPRGATFNQSLTQRLHALKLQSADASPRRAQPTTQEPESASEGEEPQRGPLDQDPRDPEEEPEERKEENRQPRRCKTRRPARRRDQSPESPPRKGPIPIRRH.

An N-terminal signal peptide occupies residues 1 to 46; it reads MDRRSRAQQWRRARHNYNDLCPPIGRRAATALLWLSCSIALLRALA. The disordered stretch occupies residues 61 to 257; that stretch reads SFLNAHHRSA…RKGPIPIRRH (197 aa). Residues 70 to 82 are compositionally biased toward low complexity; that stretch reads AAAAAAAQVLPES. Residues 86 to 103 are compositionally biased toward basic and acidic residues; sequence ESDHEHEEVEPELARPEC. The span at 104–139 shows a compositional bias: acidic residues; it reads LEYDQDDYETETDSETEPESDIESETEIETEPETEP. Over residues 200 to 211 the composition is skewed to basic and acidic residues; sequence EPQRGPLDQDPR. Residues 227-237 show a composition bias toward basic residues; it reads PRRCKTRRPAR.

It belongs to the NESP55 family. Post-translationally, binds keratan sulfate chains. In terms of processing, may be proteolytically processed to give rise to a number of active peptides.

Its subcellular location is the cytoplasmic vesicle. It is found in the secretory vesicle. The protein resides in the secreted. This chain is Neuroendocrine secretory protein 55, found in Mus musculus (Mouse).